The primary structure comprises 194 residues: Peptidyl-tRNA hydrolase (194 aa).

Tyr-16 is a binding site for tRNA. The Proton acceptor role is filled by His-21. 3 residues coordinate tRNA: Phe-67, Asn-69, and Asn-115.

Belongs to the PTH family. Monomer.

Its subcellular location is the cytoplasm. It catalyses the reaction an N-acyl-L-alpha-aminoacyl-tRNA + H2O = an N-acyl-L-amino acid + a tRNA + H(+). In terms of biological role, hydrolyzes ribosome-free peptidyl-tRNAs (with 1 or more amino acids incorporated), which drop off the ribosome during protein synthesis, or as a result of ribosome stalling. Catalyzes the release of premature peptidyl moieties from peptidyl-tRNA molecules trapped in stalled 50S ribosomal subunits, and thus maintains levels of free tRNAs and 50S ribosomes. The protein is Peptidyl-tRNA hydrolase of Salmonella paratyphi B (strain ATCC BAA-1250 / SPB7).